A 474-amino-acid polypeptide reads, in one-letter code: Transcription termination factor Rho (474 aa).

The segment at 1 to 60 (MTEELDNTPSPAGDIPQETLPKPLPAPEETAGEQPAAAPEENRGNAVREEEEAAPVLEQI) is disordered. The 76-residue stretch at 107–182 (EVVVSGVMEQ…ASVISVEDIP (76 aa)) folds into the Rho RNA-BD domain. Residues 226–231 (GKGQRG), 238–243 (RGGKTV), and Arg269 each bind ATP.

The protein belongs to the Rho family. In terms of assembly, homohexamer. The homohexamer assembles into an open ring structure.

Its function is as follows. Facilitates transcription termination by a mechanism that involves Rho binding to the nascent RNA, activation of Rho's RNA-dependent ATPase activity, and release of the mRNA from the DNA template. The sequence is that of Transcription termination factor Rho from Akkermansia muciniphila (strain ATCC BAA-835 / DSM 22959 / JCM 33894 / BCRC 81048 / CCUG 64013 / CIP 107961 / Muc).